Here is a 407-residue protein sequence, read N- to C-terminus: Tryptophan synthase beta chain (407 aa).

Lys-91 carries the N6-(pyridoxal phosphate)lysine modification.

Belongs to the TrpB family. Tetramer of two alpha and two beta chains. Requires pyridoxal 5'-phosphate as cofactor.

It carries out the reaction (1S,2R)-1-C-(indol-3-yl)glycerol 3-phosphate + L-serine = D-glyceraldehyde 3-phosphate + L-tryptophan + H2O. It functions in the pathway amino-acid biosynthesis; L-tryptophan biosynthesis; L-tryptophan from chorismate: step 5/5. In terms of biological role, the beta subunit is responsible for the synthesis of L-tryptophan from indole and L-serine. This chain is Tryptophan synthase beta chain, found in Streptococcus pneumoniae (strain P1031).